A 743-amino-acid chain; its full sequence is Glycerol dehydrogenase large subunit (743 aa).

The signal sequence occupies residues 1-24; sequence MRRSHLLATVACATLACAPLAANA. A compositionally biased stretch (low complexity) spans 27–41; it reads APAGSGGSPTSSVPG. Disordered stretches follow at residues 27 to 115 and 445 to 474; these read APAG…GHDD and ILPV…STGM.

This sequence belongs to the bacterial PQQ dehydrogenase family. The cofactor is pyrroloquinoline quinone.

The protein resides in the secreted. The catalysed reaction is glycerol + A = dihydroxyacetone + AH2. In terms of biological role, catalyzes the oxidation of glycerol to glycerone. Also acts, more slowly, on a number of other polyols including D-sorbitol, D-arabinitol, D-mannitol, meso-erythritol, adonitol and propylene glycol. The sequence is that of Glycerol dehydrogenase large subunit (sldA) from Gluconobacter oxydans (strain 621H) (Gluconobacter suboxydans).